The sequence spans 266 residues: Large ribosomal subunit protein uL2m (266 aa).

The protein belongs to the universal ribosomal protein uL2 family.

It localises to the mitochondrion. The protein is Large ribosomal subunit protein uL2m (mrpl2) of Dictyostelium citrinum (Slime mold).